The following is a 523-amino-acid chain: Cytidine and dCMP deaminase domain-containing protein 1 (523 aa).

The segment covering 1-11 (MKETDQMQSLE) has biased composition (polar residues). Disordered regions lie at residues 1 to 27 (MKET…GSMT) and 55 to 81 (QGQK…RVST). Positions 71 to 169 (GDNEELTRVS…SLLTEASSSE (99 aa)) constitute a CMP/dCMP-type deaminase 1 domain. Positions 110, 135, and 138 each coordinate Zn(2+). The Nuclear export signal motif lies at 272-284 (NLRQNMKDLILLL). Residues 318–483 (EVARHCMVQA…LNPSEAYSLD (166 aa)) form the CMP/dCMP-type deaminase 2 domain. H399 serves as a coordination point for Zn(2+). E401 functions as the Proton donor in the catalytic mechanism. Zn(2+) contacts are provided by C427 and C430. Residues 478 to 523 (EAYSLDPNEPERRENGVLRRRSAKDEQRSSKRPRLETRSAGRATLQ) form a disordered region. Residues 486 to 516 (EPERRENGVLRRRSAKDEQRSSKRPRLETRS) show a composition bias toward basic and acidic residues. The Bipartite nuclear localization signal signature appears at 489–511 (RRENGVLRRRSAKDEQRSSKRPR).

The protein belongs to the cytidine and deoxycytidylate deaminase family. Requires Zn(2+) as cofactor.

Its subcellular location is the cytoplasm. It is found in the nucleus. It catalyses the reaction 2'-deoxycytidine + H2O + H(+) = 2'-deoxyuridine + NH4(+). The catalysed reaction is cytidine + H2O + H(+) = uridine + NH4(+). Its function is as follows. Catalyzes the deamination of cytidine and deoxycytidine into uridine and deoxyuridine, respectively. May play an important role in testicular development and spermatogenesis. This Mus musculus (Mouse) protein is Cytidine and dCMP deaminase domain-containing protein 1 (Cdadc1).